Reading from the N-terminus, the 794-residue chain is Protein SPA1-RELATED 4 (794 aa).

Residues 1-268 (MKGSSESSSR…MSELLQSEFI (268 aa)) enclose the Protein kinase domain. Residues 126–165 (SCSDSGSDEDATTKSREIGSSRQEEILSERRSKQQEEVKK) form a disordered region. Basic and acidic residues predominate over residues 136 to 165 (ATTKSREIGSSRQEEILSERRSKQQEEVKK). A coiled-coil region spans residues 272–326 (RENLEEREAAMELRDRIEEQELLLEFLFLIQQRKQEAADKLQDTISLLSSDIDQV). Disordered stretches follow at residues 352-373 (QGAETTAAEEENDDNSIDEESK) and 428-447 (GRSSEKSSMSQPSKDPINDS). The span at 358 to 369 (AAEEENDDNSID) shows a compositional bias: acidic residues. WD repeat units follow at residues 482 to 521 (NSSNLVCAIGFDRDGEFFATAGVNKKIKIFECESIIKDGR), 531 to 571 (ASRS…LVTE), 574 to 614 (EHEK…SIGT), 616 to 656 (KTKA…LPLC), 660 to 698 (GHHKTVSYVRFVDSSTLVSSSTDNTLKLWDLSMSISGIN), 707 to 746 (GHTNVKNFVGLSVSDGYIATGSETNEVFVYHKAFPMPVLS), and 762 to 794 (DASQFISSVCWRGQSSTLVAANSTGNIKILEMV). A DWD box motif is present at residues 635 to 649 (AFGSADHKVYYYDLR).

Interacts with COP1 and CO. Binds to CRY1 in response to blue light, this interaction prevents SPA1/COP1 complex formation and thus avoid COP1-dependent degradation of the transcription factor HY5 by the proteasome and promotes hypocotyl elongation.

It is found in the nucleus. In terms of biological role, repressor of photomorphogenesis in the light. Probably part of the COP1/SPA E3 ubiquitin-protein ligase complex. In Arabidopsis thaliana (Mouse-ear cress), this protein is Protein SPA1-RELATED 4 (SPA4).